A 323-amino-acid chain; its full sequence is Isoeugenol synthase 1 (323 aa).

NADP(+)-binding positions include 14-17 (TGYL), 36-47 (VMPLKKNSDDSK), 88-90 (VPQ), 113-115 (SEF), Lys-135, and 155-157 (NSL). The Proton donor/acceptor role is filled by Lys-135.

Belongs to the NmrA-type oxidoreductase family. In terms of tissue distribution, expressed in flowers, especially in corolla and tubes of petals, probably in both epidermal and mesophyll cell layers.

The enzyme catalyses (E)-isoeugenol + acetate + NADP(+) = (E)-coniferyl acetate + NADPH. Its pathway is aromatic compound metabolism; phenylpropanoid biosynthesis. With respect to regulation, inhibited by zinc and copper ions. Repressed by 4-bromo-cinnamyl acetate. Its function is as follows. Involved in the biosynthesis of the floral volatile isoeugenol. Catalyzes the synthesis of the phenylpropene isoeugenol from coniferyl acetate. Phenylpropenes are the primary constituents of various essential plant oils. They are produced as antimicrobial and antianimal compounds, or as floral attractants of pollinators. Isoeugenol is a characteristic aromatic constituent of spices and a floral volatile compound. The chain is Isoeugenol synthase 1 from Petunia hybrida (Petunia).